A 280-amino-acid polypeptide reads, in one-letter code: Chaperone protein LppX (280 aa).

Residues 1-18 (MRKWLIFLLIAAVAGLSA) form the signal peptide. A lipid anchor (N-palmitoyl cysteine) is attached at C19. C19 is lipidated: S-diacylglycerol cysteine.

The protein localises to the cell membrane. Functionally, is required for the expression of the adjacently encoded xylanase Xyn11E in an active form. LppX seems to act as a specific chaperone necessary for the correct folding of the xylanase during secretion across the cytoplasmic membrane. In Paenibacillus barcinonensis, this protein is Chaperone protein LppX.